Reading from the N-terminus, the 347-residue chain is NADH-ubiquinone oxidoreductase chain 2 (347 aa).

10 helical membrane passes run 13–33 (IFTG…WLGL), 55–75 (AAIK…MAIL), 96–116 (LMIV…FWVP), 122–142 (VPLT…ISIM), 151–171 (TNIL…GGLN), 178–198 (ILAY…PYNP), 199–219 (DITI…FLIL), 237–257 (LTWL…LPPL), 274–294 (GNLI…YFYV), and 326–346 (LPTL…ILSI).

It belongs to the complex I subunit 2 family. In terms of assembly, core subunit of respiratory chain NADH dehydrogenase (Complex I) which is composed of 45 different subunits. Interacts with TMEM242.

The protein resides in the mitochondrion inner membrane. The enzyme catalyses a ubiquinone + NADH + 5 H(+)(in) = a ubiquinol + NAD(+) + 4 H(+)(out). In terms of biological role, core subunit of the mitochondrial membrane respiratory chain NADH dehydrogenase (Complex I) which catalyzes electron transfer from NADH through the respiratory chain, using ubiquinone as an electron acceptor. Essential for the catalytic activity and assembly of complex I. The chain is NADH-ubiquinone oxidoreductase chain 2 from Pongo abelii (Sumatran orangutan).